The following is a 130-amino-acid chain: Small ribosomal subunit protein uS9 (130 aa).

This sequence belongs to the universal ribosomal protein uS9 family.

In Geotalea uraniireducens (strain Rf4) (Geobacter uraniireducens), this protein is Small ribosomal subunit protein uS9.